We begin with the raw amino-acid sequence, 63 residues long: Protein DsrB (63 aa).

The protein belongs to the DsrB family.

The chain is Protein DsrB from Yersinia enterocolitica serotype O:8 / biotype 1B (strain NCTC 13174 / 8081).